Consider the following 195-residue polypeptide: dITP/XTP pyrophosphatase (195 aa).

9–14 (TGNKGK) contacts substrate. E41 and D70 together coordinate Mg(2+). D70 acts as the Proton acceptor in catalysis. Substrate-binding positions include S71, 155 to 158 (FGYD), K178, and 183 to 184 (HR).

This sequence belongs to the HAM1 NTPase family. As to quaternary structure, homodimer. Mg(2+) serves as cofactor.

The catalysed reaction is XTP + H2O = XMP + diphosphate + H(+). It carries out the reaction dITP + H2O = dIMP + diphosphate + H(+). It catalyses the reaction ITP + H2O = IMP + diphosphate + H(+). In terms of biological role, pyrophosphatase that catalyzes the hydrolysis of nucleoside triphosphates to their monophosphate derivatives, with a high preference for the non-canonical purine nucleotides XTP (xanthosine triphosphate), dITP (deoxyinosine triphosphate) and ITP. Seems to function as a house-cleaning enzyme that removes non-canonical purine nucleotides from the nucleotide pool, thus preventing their incorporation into DNA/RNA and avoiding chromosomal lesions. The chain is dITP/XTP pyrophosphatase from Haemophilus influenzae (strain ATCC 51907 / DSM 11121 / KW20 / Rd).